Here is a 141-residue protein sequence, read N- to C-terminus: DCNTLKRFKVKHQWQQVFSGEHHRTEFSLHFWKEFLHDHPDLVSLFKRVQGENIYSPEFQAHGIRVLAGLDSVIGVLDEDDTFTVQLAHLKAQHTERGTKPEYFDLFGTQLFDILGDKLGTHFDQAAWRDCYAVIAAGIKP.

The Globin domain occupies 1 to 141 (DCNTLKRFKV…YAVIAAGIKP (141 aa)). The cysteines at positions 2 and 131 are disulfide-linked. Position 94 (histidine 94) interacts with heme b.

The protein belongs to the globin family. The giant hemoglobins of worms are formed of a monomeric subunit and a disulfide-bonded trimer. This subunit is monomeric.

It is found in the secreted. The protein is Extracellular globin-1 of Metaphire sieboldi (Earthworm).